A 731-amino-acid polypeptide reads, in one-letter code: 1,4-alpha-glucan branching enzyme GlgB (731 aa).

Asp408 serves as the catalytic Nucleophile. The active-site Proton donor is Glu461.

Belongs to the glycosyl hydrolase 13 family. GlgB subfamily. Monomer.

The catalysed reaction is Transfers a segment of a (1-&gt;4)-alpha-D-glucan chain to a primary hydroxy group in a similar glucan chain.. It participates in glycan biosynthesis; glycogen biosynthesis. In terms of biological role, catalyzes the formation of the alpha-1,6-glucosidic linkages in glycogen by scission of a 1,4-alpha-linked oligosaccharide from growing alpha-1,4-glucan chains and the subsequent attachment of the oligosaccharide to the alpha-1,6 position. In Corynebacterium glutamicum (strain ATCC 13032 / DSM 20300 / JCM 1318 / BCRC 11384 / CCUG 27702 / LMG 3730 / NBRC 12168 / NCIMB 10025 / NRRL B-2784 / 534), this protein is 1,4-alpha-glucan branching enzyme GlgB.